The primary structure comprises 612 residues: Peroxisomal carnitine O-octanoyltransferase (612 aa).

At Met1 the chain carries N-acetylmethionine. N6-succinyllysine occurs at positions 40 and 57. Catalysis depends on His327, which acts as the Proton acceptor. Residues Lys406 and 410–417 each bind CoA; that span reads KEKQLHPD. An N6-acetyllysine; alternate modification is found at Lys406. Lys406 bears the N6-succinyllysine; alternate mark. Positions 439, 441, and 452 each coordinate (R)-carnitine. The Microbody targeting signal motif lies at 610–612; sequence PHL.

This sequence belongs to the carnitine/choline acetyltransferase family. In terms of assembly, monomer.

It is found in the peroxisome. The catalysed reaction is octanoyl-CoA + (R)-carnitine = O-octanoyl-(R)-carnitine + CoA. It catalyses the reaction 4,8-dimethylnonanoyl-CoA + (R)-carnitine = O-4,8-dimethylnonanoyl-(R)-carnitine + CoA. It participates in lipid metabolism; fatty acid beta-oxidation. Functionally, beta-oxidation of fatty acids. The highest activity concerns the C6 to C10 chain length substrate. This Bos taurus (Bovine) protein is Peroxisomal carnitine O-octanoyltransferase (CROT).